We begin with the raw amino-acid sequence, 450 residues long: MAPPESSHHHLLESGLLEVSKAPSAAVAAEEEEKKEAAAWTPSSSSSMTGRKIKSEASPLLRRLLGGPAAQLQEVLLGTKLYPLFSAVPLAVAAESLRLGRVWVFAFSLIGLAPLAERVSFLSEHIANTVGPTAGGIMNATCGNVPELIIALFALHKNKMEILKWSLLGSILSNLLLVLGSSLLFGGIVNIGKERPLDKRQADVSIGLLLLGVLCHIATLVSKYTSSTGDSINSSSVMQLSRSCAIVMLIAYFGSLMFQLKTHRQIFELEEDSSDSSSSEDDATDKSVIGFASAMVWLIGMAVVTAMLSSYVVTTIEEASESMGIPVRFISIILLPIVGNAAEHAGAIIFAFKNKIDISLGITLGSATQISMLVVPVILIVSWVNAIPMDLDFNLLETGSLAMAVITTAFTLQDDKWHYLKGLNLVFSYIVIAVCFFVMKALPTLKKEDD.

Over Met1–Gln73 the chain is Cytoplasmic. Positions Ala28–Lys52 are disordered. A helical membrane pass occupies residues Glu74–Ala94. The Extracellular segment spans residues Glu95 to Arg101. The helical transmembrane segment at Val102 to Leu122 threads the bilayer. Residues Ser123–Ala134 lie on the Cytoplasmic side of the membrane. A helical transmembrane segment spans residues Gly135–Leu155. The cation selection stretch occupies residues Gly143–Val178. The Extracellular segment spans residues His156–Ser170. Residues Ile171 to Ile191 traverse the membrane as a helical segment. The Cytoplasmic segment spans residues Gly192–Gln201. Residues Ala202–Ser222 traverse the membrane as a helical segment. Over Lys223–Gln239 the chain is Extracellular. Residues Leu240–Leu260 form a helical membrane-spanning segment. Residues Lys261–Ser287 are Cytoplasmic-facing. Residues Val288–Leu308 form a helical membrane-spanning segment. The Extracellular segment spans residues Ser309–Ser331. Residues Ile332–Phe352 form a helical membrane-spanning segment. A cation selection region spans residues Gly339 to Val374. Residues Lys353 to Leu360 lie on the Cytoplasmic side of the membrane. A helical membrane pass occupies residues Gly361–Val381. The Extracellular segment spans residues Ser382–Asn385. Residues Ala386–Ile406 form a helical membrane-spanning segment. Residues Thr407–Asn424 lie on the Cytoplasmic side of the membrane. The chain crosses the membrane as a helical span at residues Leu425–Leu445. At Lys446 to Asp450 the chain is on the extracellular side.

This sequence belongs to the Ca(2+):cation antiporter (CaCA) (TC 2.A.19) family. Cation/proton exchanger (CAX) subfamily. As to expression, expressed in leaf blades.

It is found in the vacuole membrane. Its function is as follows. Vacuolar cation/proton exchanger (CAX). Translocates Ca(2+) and other metal ions into vacuoles using the proton gradient formed by H(+)-ATPase and H(+)-pyrophosphatase. This Oryza sativa subsp. japonica (Rice) protein is Vacuolar cation/proton exchanger 1c (CAX1c).